The sequence spans 219 residues: Probable GTP-binding protein EngB (219 aa).

Residues 24–207 (VQPEIAFAGR…HELIESWVRP (184 aa)) enclose the EngB-type G domain. Residues 32-39 (GRSNAGKS), 59-63 (GRTQH), 81-84 (DLPG), 148-151 (TKCD), and 186-188 (FSA) each bind GTP. Mg(2+) is bound by residues S39 and T61.

This sequence belongs to the TRAFAC class TrmE-Era-EngA-EngB-Septin-like GTPase superfamily. EngB GTPase family. It depends on Mg(2+) as a cofactor.

In terms of biological role, necessary for normal cell division and for the maintenance of normal septation. This Burkholderia ambifaria (strain MC40-6) protein is Probable GTP-binding protein EngB.